Reading from the N-terminus, the 307-residue chain is Ornithine carbamoyltransferase (307 aa).

Carbamoyl phosphate is bound by residues 51–54 (STRT), Q78, R102, and 129–132 (HPCQ). L-ornithine is bound by residues N160, D220, and 224–225 (SM). Carbamoyl phosphate contacts are provided by residues 260-261 (CL) and R288.

The protein belongs to the aspartate/ornithine carbamoyltransferase superfamily. OTCase family.

The protein resides in the cytoplasm. The catalysed reaction is carbamoyl phosphate + L-ornithine = L-citrulline + phosphate + H(+). Its pathway is amino-acid biosynthesis; L-arginine biosynthesis; L-arginine from L-ornithine and carbamoyl phosphate: step 1/3. In terms of biological role, reversibly catalyzes the transfer of the carbamoyl group from carbamoyl phosphate (CP) to the N(epsilon) atom of ornithine (ORN) to produce L-citrulline. This chain is Ornithine carbamoyltransferase (argF), found in Archaeoglobus fulgidus (strain ATCC 49558 / DSM 4304 / JCM 9628 / NBRC 100126 / VC-16).